Reading from the N-terminus, the 376-residue chain is Cobalt-precorrin-5B C(1)-methyltransferase (376 aa).

The interval 353-376 (KGRTTSTPSHQPAPSSFGDRNRRT) is disordered. Residues 355–366 (RTTSTPSHQPAP) show a composition bias toward polar residues.

The protein belongs to the CbiD family.

It carries out the reaction Co-precorrin-5B + S-adenosyl-L-methionine = Co-precorrin-6A + S-adenosyl-L-homocysteine. It functions in the pathway cofactor biosynthesis; adenosylcobalamin biosynthesis; cob(II)yrinate a,c-diamide from sirohydrochlorin (anaerobic route): step 6/10. Catalyzes the methylation of C-1 in cobalt-precorrin-5B to form cobalt-precorrin-6A. In Agrobacterium fabrum (strain C58 / ATCC 33970) (Agrobacterium tumefaciens (strain C58)), this protein is Cobalt-precorrin-5B C(1)-methyltransferase.